The sequence spans 308 residues: MKLVLVVLAFIALVSSVSCTQTGGCSCGQQQSHEQQHHPQQHHPQKQQHQPPPQHHQQQQHQQQQVHMQPQKHQQQQEVHVQQQQQQPQHQQQQQQQQHQQQHQCEGQQQHHQQSQGHVQQHEQSHEQHQGQSHEQQHQQQFQGHDKQQQPQQPQQYQQGQEKSQQQQCHCQEQQQTTRCSYNYYSSSSNLKNCHEFLRQQCSPLVMPFLQSRLIQPSSCQVLQQQCCHDLRQIEPQYIHQAIYNMVQSIIQEEQQQQPCELCGSQQATQSAVAILTAAQYLPSMCGLYHSYYQNNPCSSNDISGVCN.

An N-terminal signal peptide occupies residues 1–19; that stretch reads MKLVLVVLAFIALVSSVSC. Positions 27–159 are disordered; the sequence is CGQQQSHEQQ…QPQQPQQYQQ (133 aa). Low complexity predominate over residues 55-119; sequence HHQQQQHQQQ…QHHQQSQGHV (65 aa). Positions 120-129 are enriched in basic and acidic residues; it reads QQHEQSHEQH. A compositionally biased stretch (low complexity) spans 130–159; it reads QGQSHEQQHQQQFQGHDKQQQPQQPQQYQQ. A lipid anchor (GPI-anchor amidated cysteine) is attached at Cys-286. Positions 287 to 308 are cleaved as a propeptide — removed in mature form; it reads GLYHSYYQNNPCSSNDISGVCN.

Belongs to the gliadin/glutenin family. Interacts with OP10 (via N-terminus).

The protein resides in the cell membrane. In terms of biological role, zeins are major seed storage proteins. This chain is 50 kDa gamma-zein, found in Zea mays (Maize).